A 90-amino-acid polypeptide reads, in one-letter code: UPF0367 protein Npun_R4552 (90 aa).

Belongs to the UPF0367 family.

This is UPF0367 protein Npun_R4552 from Nostoc punctiforme (strain ATCC 29133 / PCC 73102).